The primary structure comprises 202 residues: Homeobox protein ceh-13 (202 aa).

2 disordered regions span residues 60 to 83 and 166 to 202; these read PATA…LPTG and RMKE…KNFK. Positions 63-81 are enriched in low complexity; that stretch reads ASGLSPPASRSSNSSAELP. A DNA-binding region (homeobox) is located at residues 114–173; it reads NGTNRTNFTTHQLTELEKEFHTAKYVNRTRRTEIASNLKLQEAQVKIWFQNRRMKEKKRE. Positions 183 to 194 are enriched in polar residues; that stretch reads TWESNSPTSSCS.

It is found in the nucleus. In Caenorhabditis elegans, this protein is Homeobox protein ceh-13 (ceh-13).